The chain runs to 180 residues: Small ribosomal subunit protein eS10y (180 aa).

Residues 92–180 form a disordered region; sequence LKKQQKPLGR…GGGAAGSDLP (89 aa). Over residues 108 to 128 the composition is skewed to basic and acidic residues; that stretch reads DRPRGPPRGDGERRFGDRDGY. Residues 152-180 are compositionally biased toward gly residues; sequence FRGGAGGARQGFGRGAGGFGGGAAGSDLP.

Belongs to the eukaryotic ribosomal protein eS10 family.

The protein resides in the cytoplasm. The chain is Small ribosomal subunit protein eS10y (RPS10B) from Arabidopsis thaliana (Mouse-ear cress).